Consider the following 134-residue polypeptide: ATP synthase epsilon chain, chloroplastic (134 aa).

This sequence belongs to the ATPase epsilon chain family. In terms of assembly, F-type ATPases have 2 components, CF(1) - the catalytic core - and CF(0) - the membrane proton channel. CF(1) has five subunits: alpha(3), beta(3), gamma(1), delta(1), epsilon(1). CF(0) has three main subunits: a, b and c.

It is found in the plastid. The protein localises to the chloroplast thylakoid membrane. In terms of biological role, produces ATP from ADP in the presence of a proton gradient across the membrane. The polypeptide is ATP synthase epsilon chain, chloroplastic (Gracilaria tenuistipitata var. liui (Red alga)).